The chain runs to 279 residues: Oxygen-dependent coproporphyrinogen-III oxidase (279 aa).

Substrate is bound at residue S102. Positions 106 and 116 each coordinate a divalent metal cation. H116 serves as the catalytic Proton donor. Substrate is bound at residue N118–R120. A divalent metal cation is bound by residues H149 and H179. Positions Y244 to N279 are important for dimerization.

This sequence belongs to the aerobic coproporphyrinogen-III oxidase family. Homodimer. A divalent metal cation serves as cofactor.

Its subcellular location is the cytoplasm. The catalysed reaction is coproporphyrinogen III + O2 + 2 H(+) = protoporphyrinogen IX + 2 CO2 + 2 H2O. The protein operates within porphyrin-containing compound metabolism; protoporphyrin-IX biosynthesis; protoporphyrinogen-IX from coproporphyrinogen-III (O2 route): step 1/1. Functionally, involved in the heme biosynthesis. Catalyzes the aerobic oxidative decarboxylation of propionate groups of rings A and B of coproporphyrinogen-III to yield the vinyl groups in protoporphyrinogen-IX. In Rickettsia rickettsii (strain Iowa), this protein is Oxygen-dependent coproporphyrinogen-III oxidase.